Reading from the N-terminus, the 469-residue chain is Soluble pyridine nucleotide transhydrogenase (469 aa).

Position 39 to 48 (Glu-39 to Cys-48) interacts with FAD.

The protein belongs to the class-I pyridine nucleotide-disulfide oxidoreductase family. It depends on FAD as a cofactor.

The protein localises to the cytoplasm. It carries out the reaction NAD(+) + NADPH = NADH + NADP(+). Its function is as follows. Conversion of NADPH, generated by peripheral catabolic pathways, to NADH, which can enter the respiratory chain for energy generation. This chain is Soluble pyridine nucleotide transhydrogenase, found in Photobacterium profundum (strain SS9).